The following is a 166-amino-acid chain: UPF0178 protein BPUM_2255 (166 aa).

It belongs to the UPF0178 family.

The sequence is that of UPF0178 protein BPUM_2255 from Bacillus pumilus (strain SAFR-032).